The chain runs to 313 residues: Porphobilinogen deaminase (313 aa).

The residue at position 242 (cysteine 242) is an S-(dipyrrolylmethanemethyl)cysteine.

This sequence belongs to the HMBS family. As to quaternary structure, monomer. Dipyrromethane is required as a cofactor.

It carries out the reaction 4 porphobilinogen + H2O = hydroxymethylbilane + 4 NH4(+). The protein operates within porphyrin-containing compound metabolism; protoporphyrin-IX biosynthesis; coproporphyrinogen-III from 5-aminolevulinate: step 2/4. Its function is as follows. Tetrapolymerization of the monopyrrole PBG into the hydroxymethylbilane pre-uroporphyrinogen in several discrete steps. In Pectobacterium carotovorum subsp. carotovorum (strain PC1), this protein is Porphobilinogen deaminase.